Reading from the N-terminus, the 104-residue chain is Chitin-binding protein 2 (104 aa).

As to quaternary structure, oligomer in an unreduced state. Glycosylated.

Its function is as follows. Chitin-binding protein. Has antifungal activity against C.krusei, C.albicans, C.tropicalis and C.parapsilosis. Inhibits C.albicans by increasing cell membrane permeability and production of reactive oxygen species. Has no hemagglutinating activity. This Moringa oleifera (Horseradish tree) protein is Chitin-binding protein 2.